We begin with the raw amino-acid sequence, 360 residues long: Phospho-N-acetylmuramoyl-pentapeptide-transferase (360 aa).

Helical transmembrane passes span 27–47, 70–90, 98–118, 134–154, 168–188, 199–219, 239–259, 263–283, 288–308, and 337–357; these read GALF…ISLL, GTPT…ILLW, VWVT…DDYL, LLLE…YSPA, TLLN…VGAG, GLAI…AYLV, LAVV…FNAP, IFMG…IAVA, IVLA…IIQV, and QVVI…LATL.

It belongs to the glycosyltransferase 4 family. MraY subfamily. It depends on Mg(2+) as a cofactor.

Its subcellular location is the cell inner membrane. The catalysed reaction is UDP-N-acetyl-alpha-D-muramoyl-L-alanyl-gamma-D-glutamyl-meso-2,6-diaminopimeloyl-D-alanyl-D-alanine + di-trans,octa-cis-undecaprenyl phosphate = di-trans,octa-cis-undecaprenyl diphospho-N-acetyl-alpha-D-muramoyl-L-alanyl-D-glutamyl-meso-2,6-diaminopimeloyl-D-alanyl-D-alanine + UMP. Its pathway is cell wall biogenesis; peptidoglycan biosynthesis. Catalyzes the initial step of the lipid cycle reactions in the biosynthesis of the cell wall peptidoglycan: transfers peptidoglycan precursor phospho-MurNAc-pentapeptide from UDP-MurNAc-pentapeptide onto the lipid carrier undecaprenyl phosphate, yielding undecaprenyl-pyrophosphoryl-MurNAc-pentapeptide, known as lipid I. The sequence is that of Phospho-N-acetylmuramoyl-pentapeptide-transferase from Methylorubrum extorquens (strain CM4 / NCIMB 13688) (Methylobacterium extorquens).